We begin with the raw amino-acid sequence, 251 residues long: Meso-2,3-butanediol dehydrogenase (251 aa).

NAD(+)-binding residues include N15, M17, D36, D60, V61, and N87. Residues S138, S140, and Y151 each contribute to the (R)-acetoin site. S138 is a (S)-acetoin binding site. Residues Y151, K155, V184, and T186 each contribute to the NAD(+) site. Position 151 (Y151) interacts with (S)-acetoin. Y151 (proton acceptor) is an active-site residue.

It belongs to the short-chain dehydrogenases/reductases (SDR) family. Homotetramer; dimer of dimers.

The catalysed reaction is (R,S)-butane-2,3-diol + NAD(+) = (R)-acetoin + NADH + H(+). The enzyme catalyses (S,S)-butane-2,3-diol + NAD(+) = (S)-acetoin + NADH + H(+). It carries out the reaction (S)-acetoin + NAD(+) = diacetyl + NADH + H(+). Its activity is regulated as follows. Oxidation of meso-2,3-butanediol is enhanced in the presence of Fe(2+). Reduction of diacetyl and (3S/3R)-acetoin is slightly enhanced in the presence of Mg(2+) and Mn(2+). Activity is inhibited by several metal ions, particularly Fe(3+) for reduction of diacetyl and acetoin. Catalyzes the NAD-dependent oxidation of meso-2,3-butanediol to (3R)-acetoin, and of (2S,3S)-2,3-butanediol to (3S)-acetoin, with much lower efficiency. Can also oxidize several primary alcohols such as glycerol, 1-2-pentanediol and 1,2-propanediol, with lower activity. Cannot use (2R,3R)-2,3-butanediol. In the presence of NADH, catalyzes the reduction of (3R)-acetoin to meso-2,3-butanediol, of (3S)-acetoin to (2S,3S)-2,3-butanediol and of diacetyl to (3S)-acetoin. No activity is detected with NADPH/NADP(+). The protein is Meso-2,3-butanediol dehydrogenase of Serratia marcescens.